Reading from the N-terminus, the 702-residue chain is MILTLSKTEMEVVRRVLGREPKEAEWKLVDALWSEHCSYKSSKVFLRSLPSTGPNVIMSVEDWQDAGAVDVGDGLALVLKVESHNHPSAIDPFNGAATGVGGILRDIISKGAKPIALLDMIRVGKLDDKGKWLLKNIISGIGFYGNSVGVPVVGGELSFDETYNDNPLVDVACAGIVSKDSIVPSVVREPGLRLVLAGFTGLDGLGGASFASRKLSGMDEIGAVQIADPFAGKIIIDVTLEIAKEVEAIKDLGGGGLAVAVTEMANGLGAVVNLERVPLRFEYLSPEDIIISETQERMLFAVKPEKVESVCAKFREYNYPCEDIGEITAEPKVRFLYNGEPVAELPSDLLLSPPLNVWPAERKPRKREPEREVALGEALRAVLTHPDLVSKEWAYSQFDYEVGTSTVVKPGQGDSAVVELPNGKYLALKGDANQDLCAEDAYECGKAIVAEAYRNLATVGARGIALVDHLQFGDPRKPHVYQDFIDAVRGISEASKFFSIPVVGGKVSFHNEDKNGNPIKPTPLVVMAGLVEGKLARNRVEEGDLVLIGETRNELAGTLFSRIFGGGGEVAKTRLMEDLIASNLVIKGINEGKITWNKDVSKGGLAGALLPILAKGFSVRISSSQVIGTSNLLGKMFSESGGRFLVLTSDPQWFMYQAGRMGIQALAIGKVTKDGSKLVLDYETFPMDSIVENYYSFLEGSL.

Residue His36 is part of the active site. 2 residues coordinate ATP: Tyr39 and Lys80. Glu82 is a binding site for Mg(2+). Residues 83-86 (SHNH) and Arg105 each bind substrate. Catalysis depends on His84, which acts as the Proton acceptor. Asp106 is a Mg(2+) binding site. Gln225 is a substrate binding site. Residue Asp251 coordinates Mg(2+). 293–295 (ETQ) is a substrate binding site. Residues Asp468 and Gly505 each contribute to the ATP site. Ser508 lines the substrate pocket.

This sequence belongs to the FGAMS family. Monomer. Part of the FGAM synthase complex composed of 1 PurL, 1 PurQ and 2 PurS subunits.

The protein resides in the cytoplasm. It carries out the reaction N(2)-formyl-N(1)-(5-phospho-beta-D-ribosyl)glycinamide + L-glutamine + ATP + H2O = 2-formamido-N(1)-(5-O-phospho-beta-D-ribosyl)acetamidine + L-glutamate + ADP + phosphate + H(+). It functions in the pathway purine metabolism; IMP biosynthesis via de novo pathway; 5-amino-1-(5-phospho-D-ribosyl)imidazole from N(2)-formyl-N(1)-(5-phospho-D-ribosyl)glycinamide: step 1/2. Functionally, part of the phosphoribosylformylglycinamidine synthase complex involved in the purines biosynthetic pathway. Catalyzes the ATP-dependent conversion of formylglycinamide ribonucleotide (FGAR) and glutamine to yield formylglycinamidine ribonucleotide (FGAM) and glutamate. The FGAM synthase complex is composed of three subunits. PurQ produces an ammonia molecule by converting glutamine to glutamate. PurL transfers the ammonia molecule to FGAR to form FGAM in an ATP-dependent manner. PurS interacts with PurQ and PurL and is thought to assist in the transfer of the ammonia molecule from PurQ to PurL. This chain is Phosphoribosylformylglycinamidine synthase subunit PurL, found in Metallosphaera sedula (strain ATCC 51363 / DSM 5348 / JCM 9185 / NBRC 15509 / TH2).